The primary structure comprises 634 residues: Chaperone protein dnaK2 (634 aa).

T197 carries the phosphothreonine; by autocatalysis modification. The segment covering 601–620 (SAEASANAQAGPSSSSSSSS) has biased composition (low complexity). Residues 601 to 634 (SAEASANAQAGPSSSSSSSSGDDDVIDAEFSESK) are disordered. Over residues 621-634 (GDDDVIDAEFSESK) the composition is skewed to acidic residues.

It belongs to the heat shock protein 70 family.

Its function is as follows. Acts as a chaperone. The chain is Chaperone protein dnaK2 (dnaK2) from Synechococcus elongatus (strain ATCC 33912 / PCC 7942 / FACHB-805) (Anacystis nidulans R2).